The primary structure comprises 393 residues: ATP phosphoribosyltransferase regulatory subunit (393 aa).

This sequence belongs to the class-II aminoacyl-tRNA synthetase family. HisZ subfamily. As to quaternary structure, heteromultimer composed of HisG and HisZ subunits.

It localises to the cytoplasm. It participates in amino-acid biosynthesis; L-histidine biosynthesis; L-histidine from 5-phospho-alpha-D-ribose 1-diphosphate: step 1/9. Its function is as follows. Required for the first step of histidine biosynthesis. May allow the feedback regulation of ATP phosphoribosyltransferase activity by histidine. The protein is ATP phosphoribosyltransferase regulatory subunit of Shouchella clausii (strain KSM-K16) (Alkalihalobacillus clausii).